Here is a 180-residue protein sequence, read N- to C-terminus: Large ribosomal subunit protein uL5c (180 aa).

This sequence belongs to the universal ribosomal protein uL5 family. In terms of assembly, part of the 50S ribosomal subunit; contacts the 5S rRNA.

It is found in the plastid. Its subcellular location is the chloroplast. Its function is as follows. Binds 5S rRNA, forms part of the central protuberance of the 50S subunit. The chain is Large ribosomal subunit protein uL5c (rpl5) from Oltmannsiellopsis viridis (Marine flagellate).